We begin with the raw amino-acid sequence, 423 residues long: 5-hydroxytryptamine receptor 1A (423 aa).

Residues 1-20 (MEGLSPGQGNNTTSSEGPFG) are disordered. Over 1-38 (MEGLSPGQGNNTTSSEGPFGTRGNATGISDVTFSYQVI) the chain is Extracellular. A compositionally biased stretch (polar residues) spans 7–16 (GQGNNTTSSE). N-linked (GlcNAc...) asparagine glycans are attached at residues asparagine 10, asparagine 11, and asparagine 24. The helical transmembrane segment at 39 to 59 (TSLLLGTLIFCAVLGNACVVA) threads the bilayer. Residues 60–73 (AIALERSLQNVANY) are Cytoplasmic-facing. Residues 74–98 (LIGSLAVTDLMVSVLVLPMAALYQV) form a helical membrane-spanning segment. Residues 99–107 (LNKWTLGQV) lie on the Extracellular side of the membrane. A helical transmembrane segment spans residues 108–132 (TCDLFIALDVLCCTSSILHLCAIAL). An intrachain disulfide couples cysteine 109 to cysteine 187. Positions 116 and 120 each coordinate serotonin. The DRY motif; important for ligand-induced conformation changes signature appears at 133–135 (DRY). Over 133-152 (DRYWAITDPIDYVNKRTPRR) the chain is Cytoplasmic. A helical membrane pass occupies residues 153 to 174 (AAALISLTWLIGFLISIPPMLG). At 175 to 193 (WRTPEDRSDPDACTISKDH) the chain is on the extracellular side. Residues 194-216 (GYTIYSTFGAFYIPLLLMLVLYG) traverse the membrane as a helical segment. At 217-346 (RIFRAARFRI…LARERKTVKT (130 aa)) the chain is on the cytoplasmic side. A disordered region spans residues 235-277 (RKGADARSGVSPAPQPRKSVNGEPGGREWRQGPGSKAGGPLCT). 1D-myo-inositol 4-phosphate contacts are provided by lysine 345, threonine 346, and glycine 352. Residues 347–370 (LGIIMGTFILCWLPFFIVALVLPF) form a helical membrane-spanning segment. The Extracellular portion of the chain corresponds to 371–378 (CESSCHMP). A helical transmembrane segment spans residues 379 to 403 (TLLGAIINWLGYSNSLLNPVIYAYF). The NPxxY motif; important for ligand-induced conformation changes and signaling motif lies at 396-400 (NPVIY). Residues phenylalanine 403, asparagine 404, and lysine 405 each coordinate 1D-myo-inositol 4-phosphate. At 404 to 423 (NKDFQNAFKKIVRCKFCRRR) the chain is on the cytoplasmic side.

It belongs to the G-protein coupled receptor 1 family. 5-hydroxytryptamine receptor subfamily. HTR1A sub-subfamily. Heterodimer; heterodimerizes with GPER1. Interacts with YIF1B. Interacts with GPR39 and GALR1.

The protein localises to the cell membrane. It localises to the cell projection. The protein resides in the dendrite. Its activity is regulated as follows. G-protein coupled receptor activity is regulated by lipids: phosphatidylinositol 4-phosphate increases HTR1A-mediated activity. G-protein coupled receptor for 5-hydroxytryptamine (serotonin). Also functions as a receptor for various drugs and psychoactive substances. Ligand binding causes a conformation change that triggers signaling via guanine nucleotide-binding proteins (G proteins) and modulates the activity of downstream effectors, such as adenylate cyclase. HTR1A is coupled to G(i)/G(o) G alpha proteins and mediates inhibitory neurotransmission: signaling inhibits adenylate cyclase activity and activates a phosphatidylinositol-calcium second messenger system that regulates the release of Ca(2+) ions from intracellular stores. Beta-arrestin family members regulate signaling by mediating both receptor desensitization and resensitization processes. The protein is 5-hydroxytryptamine receptor 1A (HTR1A) of Vulpes vulpes (Red fox).